The primary structure comprises 329 residues: Acetyl-coenzyme A carboxylase carboxyl transferase subunit alpha (329 aa).

In terms of domain architecture, CoA carboxyltransferase C-terminal spans 40–294 (QLESLAARRR…RAALERHLGE (255 aa)).

This sequence belongs to the AccA family. In terms of assembly, acetyl-CoA carboxylase is a heterohexamer composed of biotin carboxyl carrier protein (AccB), biotin carboxylase (AccC) and two subunits each of ACCase subunit alpha (AccA) and ACCase subunit beta (AccD).

It is found in the cytoplasm. It carries out the reaction N(6)-carboxybiotinyl-L-lysyl-[protein] + acetyl-CoA = N(6)-biotinyl-L-lysyl-[protein] + malonyl-CoA. Its pathway is lipid metabolism; malonyl-CoA biosynthesis; malonyl-CoA from acetyl-CoA: step 1/1. Functionally, component of the acetyl coenzyme A carboxylase (ACC) complex. First, biotin carboxylase catalyzes the carboxylation of biotin on its carrier protein (BCCP) and then the CO(2) group is transferred by the carboxyltransferase to acetyl-CoA to form malonyl-CoA. The chain is Acetyl-coenzyme A carboxylase carboxyl transferase subunit alpha from Parasynechococcus marenigrum (strain WH8102).